A 490-amino-acid chain; its full sequence is 4-hydroxybutyryl-CoA dehydratase/vinylacetyl-CoA-Delta-isomerase (490 aa).

Cys99 and Cys103 together coordinate [4Fe-4S] cluster. FAD contacts are provided by residues 149-156 and 188-190; these read MTDPKGDR and HQT. Residues His292 and Cys299 each contribute to the [4Fe-4S] cluster site. Residues His325 and 386–390 each bind FAD; that span reads DIAGG.

Homotetramer. The cofactor is FAD. [4Fe-4S] cluster serves as cofactor.

It catalyses the reaction 4-hydroxybutanoyl-CoA = (2E)-butenoyl-CoA + H2O. The enzyme catalyses vinylacetyl-CoA = (2E)-butenoyl-CoA. Functionally, catalyzes the reversible conversion of 4-hydroxybutyryl-CoA to crotonyl-CoA. The mechanism of the reaction seems to go through three steps: (1) the FAD-dependent oxidation of 4-hydroxybutyryl-CoA to 4-hydroxycrotonyl-CoA; (2) the hydroxyl group is substituted by a hydride derived from the now reduced FAD in an SN2' reaction leading to vinylacetyl-CoA; (3) isomerization to yield crotonyl-CoA. The polypeptide is 4-hydroxybutyryl-CoA dehydratase/vinylacetyl-CoA-Delta-isomerase (abfD) (Clostridium aminobutyricum).